A 134-amino-acid polypeptide reads, in one-letter code: DNA-binding protein H-NS (134 aa).

Residues 111 to 116 (QGRTLA) mediate DNA binding.

The protein belongs to the histone-like protein H-NS family. As to quaternary structure, homodimer that oligomerizes on DNA into higher-order complexes that form bridges between disparate regions of DNA compacting it. Interacts with YmoA and other similar proteins.

It is found in the cytoplasm. The protein localises to the nucleoid. Its function is as follows. A DNA-binding protein implicated in transcriptional repression and chromosome organization and compaction. Binds nucleation sites in AT-rich DNA and bridges them, forming higher-order nucleoprotein complexes and condensing the chromosome. As many horizontally transferred genes are AT-rich, it plays a central role in silencing foreign genes. A subset of genes are repressed by H-NS in association with other proteins. This Proteus vulgaris protein is DNA-binding protein H-NS (hns).